We begin with the raw amino-acid sequence, 255 residues long: Hydroxyacylglutathione hydrolase (255 aa).

Histidine 55, histidine 57, aspartate 59, histidine 60, histidine 113, aspartate 132, and histidine 170 together coordinate Zn(2+).

It belongs to the metallo-beta-lactamase superfamily. Glyoxalase II family. In terms of assembly, monomer. It depends on Zn(2+) as a cofactor.

It carries out the reaction an S-(2-hydroxyacyl)glutathione + H2O = a 2-hydroxy carboxylate + glutathione + H(+). Its pathway is secondary metabolite metabolism; methylglyoxal degradation; (R)-lactate from methylglyoxal: step 2/2. Functionally, thiolesterase that catalyzes the hydrolysis of S-D-lactoyl-glutathione to form glutathione and D-lactic acid. This Methylobacterium sp. (strain 4-46) protein is Hydroxyacylglutathione hydrolase.